A 124-amino-acid polypeptide reads, in one-letter code: Small ribosomal subunit protein uS13 (124 aa).

Over residues 93–117 (KNLPVRGQRTRTNARTRKGPRKTVA) the composition is skewed to basic residues. The segment at 93 to 124 (KNLPVRGQRTRTNARTRKGPRKTVANKKIESK) is disordered.

The protein belongs to the universal ribosomal protein uS13 family. As to quaternary structure, part of the 30S ribosomal subunit. Forms a loose heterodimer with protein S19. Forms two bridges to the 50S subunit in the 70S ribosome.

Located at the top of the head of the 30S subunit, it contacts several helices of the 16S rRNA. In the 70S ribosome it contacts the 23S rRNA (bridge B1a) and protein L5 of the 50S subunit (bridge B1b), connecting the 2 subunits; these bridges are implicated in subunit movement. Contacts the tRNAs in the A and P-sites. This chain is Small ribosomal subunit protein uS13, found in Mycoplasma genitalium (strain ATCC 33530 / DSM 19775 / NCTC 10195 / G37) (Mycoplasmoides genitalium).